A 521-amino-acid polypeptide reads, in one-letter code: Medium/long-chain-fatty-acid--[acyl-carrier-protein] ligase MbtM (521 aa).

Belongs to the ATP-dependent AMP-binding enzyme family.

It catalyses the reaction a long-chain fatty acid + holo-[ACP] + ATP = a long-chain fatty acyl-[ACP] + AMP + diphosphate. The enzyme catalyses a medium-chain fatty acid + holo-[ACP] + ATP = a medium-chain fatty acyl-[ACP] + AMP + diphosphate. The protein operates within siderophore biosynthesis; mycobactin biosynthesis. Activates lipidic moieties required for mycobactin biosynthesis. Converts medium- to long-chain aliphatic fatty acids into acyl adenylate, which is further transferred on to the phosphopantetheine arm of the carrier protein MbtL. This is Medium/long-chain-fatty-acid--[acyl-carrier-protein] ligase MbtM (mbtM) from Mycobacterium tuberculosis (strain CDC 1551 / Oshkosh).